The following is a 1250-amino-acid chain: TBC1 domain family member 9B (1250 aa).

2 GRAM domains span residues Leu142–Ala209 and Glu288–Asp356. Phosphothreonine is present on Thr397. The segment at Thr397 to Phe443 is disordered. Phosphoserine is present on residues Ser411, Ser432, Ser435, and Ser463. Over residues Asp414 to Phe443 the composition is skewed to polar residues. A Rab-GAP TBC domain is found at Gly508–Gly695. A helical transmembrane segment spans residues Leu668–Val688. One can recognise an EF-hand domain in the interval His879–Gly914. Disordered regions lie at residues Leu974–Arg999, Ser1069–Gln1093, and Val1128–Tyr1157. Basic and acidic residues predominate over residues Ser984–Arg999. Phosphoserine is present on Ser1241.

The protein resides in the membrane. In terms of biological role, may act as a GTPase-activating protein for Rab family protein(s). The chain is TBC1 domain family member 9B (TBC1D9B) from Homo sapiens (Human).